A 147-amino-acid polypeptide reads, in one-letter code: uncharacterized protein (147 aa).

The CMP/dCMP-type deaminase domain maps to 4-120; the sequence is KWAKRFFQMA…EQTEDFLSRW (117 aa). H67 is a binding site for Zn(2+). The active-site Proton donor is E69. Zn(2+)-binding residues include C92 and C95.

Belongs to the cytidine and deoxycytidylate deaminase family. The cofactor is Zn(2+).

This is an uncharacterized protein from Aliivibrio fischeri (Vibrio fischeri).